The sequence spans 278 residues: Large ribosomal subunit protein uL2 (278 aa).

Disordered regions lie at residues Met1–His58 and Val224–Arg278. Positions Glu23–Leu33 are enriched in basic and acidic residues. The segment covering Leu37–His58 has biased composition (basic residues). A compositionally biased stretch (basic and acidic residues) spans Pro253 to Ile268. Residues Val269–Arg278 are compositionally biased toward basic residues.

Belongs to the universal ribosomal protein uL2 family. In terms of assembly, part of the 50S ribosomal subunit. Forms a bridge to the 30S subunit in the 70S ribosome.

Functionally, one of the primary rRNA binding proteins. Required for association of the 30S and 50S subunits to form the 70S ribosome, for tRNA binding and peptide bond formation. It has been suggested to have peptidyltransferase activity; this is somewhat controversial. Makes several contacts with the 16S rRNA in the 70S ribosome. The sequence is that of Large ribosomal subunit protein uL2 from Mycolicibacterium vanbaalenii (strain DSM 7251 / JCM 13017 / BCRC 16820 / KCTC 9966 / NRRL B-24157 / PYR-1) (Mycobacterium vanbaalenii).